The primary structure comprises 325 residues: L-lactate dehydrogenase (325 aa).

Residues V21, D42, K47, Y73, and 87–88 (GA) contribute to the NAD(+) site. Substrate is bound by residues Q90, R96, and 128–131 (NPVD). NAD(+) is bound by residues 126-128 (ATN) and S151. 156–159 (DTAR) contributes to the substrate binding site. The beta-D-fructose 1,6-bisphosphate site is built by R161 and H176. H183 functions as the Proton acceptor in the catalytic mechanism. Position 228 is a phosphotyrosine (Y228). T237 provides a ligand contact to substrate.

The protein belongs to the LDH/MDH superfamily. LDH family. As to quaternary structure, homotetramer.

It is found in the cytoplasm. The catalysed reaction is (S)-lactate + NAD(+) = pyruvate + NADH + H(+). Its pathway is fermentation; pyruvate fermentation to lactate; (S)-lactate from pyruvate: step 1/1. Its activity is regulated as follows. Allosterically activated by fructose 1,6-bisphosphate (FBP). Its function is as follows. Catalyzes the conversion of lactate to pyruvate. The chain is L-lactate dehydrogenase from Shouchella clausii (strain KSM-K16) (Alkalihalobacillus clausii).